A 124-amino-acid polypeptide reads, in one-letter code: Small ribosomal subunit protein uS13 (124 aa).

The interval 94 to 124 (GLPLRGQRTKNNSRTRKGRRKTVANKKKATK) is disordered. Positions 100 to 124 (QRTKNNSRTRKGRRKTVANKKKATK) are enriched in basic residues.

This sequence belongs to the universal ribosomal protein uS13 family. In terms of assembly, part of the 30S ribosomal subunit. Forms a loose heterodimer with protein S19. Forms two bridges to the 50S subunit in the 70S ribosome.

Functionally, located at the top of the head of the 30S subunit, it contacts several helices of the 16S rRNA. In the 70S ribosome it contacts the 23S rRNA (bridge B1a) and protein L5 of the 50S subunit (bridge B1b), connecting the 2 subunits; these bridges are implicated in subunit movement. Contacts the tRNAs in the A and P-sites. The polypeptide is Small ribosomal subunit protein uS13 (Christiangramia forsetii (strain DSM 17595 / CGMCC 1.15422 / KT0803) (Gramella forsetii)).